We begin with the raw amino-acid sequence, 350 residues long: Neurogenic differentiation factor 1 (350 aa).

The segment at 1-91 (MTKSYSEESM…KKKKMTKARM (91 aa)) is disordered. Residues 7–18 (EESMMLESQSSS) are compositionally biased toward low complexity. Basic and acidic residues predominate over residues 22–38 (DKCHSSSQDERDVDKTS). Over residues 44–72 (DMEDDDDAGLNRLEDEDDEEEEEEEEDGD) the composition is skewed to acidic residues. The segment covering 76–91 (PKRRGPKKKKMTKARM) has biased composition (basic residues). Positions 82–88 (KKKKMTK) match the Nuclear localization signal motif. A bHLH domain is found at 96–148 (MRRMKANARERNRMHGLNDALESLRKVVPCYSKTQKLSKIETLRLAKNYIWAL).

Efficient DNA binding requires dimerization with another bHLH protein. As to expression, in the embryo, expressed broadly in a subset of primary neurons in the brain and spinal cord. At 28 hours post-fertilization (hpf), regions of expression include telencephalon, olfactory placode, epiphysis, cranial ganglia, acoustic ganglia, Rohon-Beard mechano-sensory neurons and motoneurons. In 2 day postembryonic brain, expressed in many brain regions but absent from subpallium, the ventral preoptic region, ventral thalamus and hypothalamus; sites of expression extend laterally from the ventricular proliferative regions and correspond to freshly determined cell populations. In adult, expressed in all tissues examined with highest levels in brain.

The protein resides in the cytoplasm. The protein localises to the nucleus. May act as a transcriptional activator. Differentiation factor required for neurogenesis. Acts as an upstream activator of isl1. This chain is Neurogenic differentiation factor 1, found in Danio rerio (Zebrafish).